A 196-amino-acid polypeptide reads, in one-letter code: Small ribosomal subunit protein uS4c (196 aa).

The interval L15–Q43 is disordered. Residues M89–N150 enclose the S4 RNA-binding domain.

The protein belongs to the universal ribosomal protein uS4 family. In terms of assembly, part of the 30S ribosomal subunit. Contacts protein S5. The interaction surface between S4 and S5 is involved in control of translational fidelity.

The protein resides in the plastid. Its subcellular location is the chloroplast. One of the primary rRNA binding proteins, it binds directly to 16S rRNA where it nucleates assembly of the body of the 30S subunit. Its function is as follows. With S5 and S12 plays an important role in translational accuracy. This Melinis repens (Red Natal grass) protein is Small ribosomal subunit protein uS4c (rps4).